Here is a 1302-residue protein sequence, read N- to C-terminus: 1-phosphatidylinositol 4,5-bisphosphate phosphodiesterase gamma-1 (1302 aa).

An N-acetylalanine modification is found at alanine 2. Positions arginine 27 to glutamate 142 constitute a PH 1 domain. Positions glutamine 152–arginine 187 constitute an EF-hand domain. Residues aspartate 165, asparagine 167, glutamate 169, arginine 171, and aspartate 176 each coordinate Ca(2+). One can recognise a PI-PLC X-box domain in the interval aspartate 320 to lysine 464. Catalysis depends on residues histidine 335 and histidine 380. The 35-residue stretch at serine 489–threonine 523 folds into the PH 2; first part domain. Tyrosine 506 is subject to Phosphotyrosine. The disordered stretch occupies residues glutamate 522–histidine 545. SH2 domains lie at tryptophan 550–valine 657 and tryptophan 668–isoleucine 756. The residue at position 771 (tyrosine 771) is a Phosphotyrosine; by SYK. At tyrosine 775 the chain carries Phosphotyrosine. Phosphotyrosine; by ITK, SYK and TXK is present on tyrosine 783. The SH3 domain occupies threonine 791–asparagine 851. Residues phenylalanine 895 to glutamine 931 form the PH 2; second part domain. Positions leucine 953 to arginine 1070 constitute a PI-PLC Y-box domain. Tyrosine 977 carries the phosphotyrosine modification. Positions aspartate 1071–asparagine 1194 constitute a C2 domain. Phosphoserine occurs at positions 1221, 1227, 1233, and 1248. A Phosphotyrosine modification is found at tyrosine 1253. Serine 1263 carries the phosphoserine modification.

Interacts (via SH2 domain) with FGFR1, FGFR2, FGFR3 and FGFR4 (phosphorylated). Interacts with RALGPS1. Interacts (via SH2 domains) with VIL1 (phosphorylated at C-terminus tyrosine phosphorylation sites). Interacts (via SH2 domain) with RET. Interacts with AGAP2 via its SH3 domain. Interacts with LAT (phosphorylated) upon TCR activation. Interacts (via SH3 domain) with the Pro-rich domain of TNK1. Associates with BLNK, VAV1, GRB2 and NCK1 in a B-cell antigen receptor-dependent fashion. Interacts with CBLB in activated T-cells; which inhibits phosphorylation. Interacts with SHB. Interacts (via SH3 domain) with the Arg/Gly-rich-flanked Pro-rich domains of KHDRBS1/SAM68. This interaction is selectively regulated by arginine methylation of KHDRBS1/SAM68. Interacts with INPP5D/SHIP1, THEMIS and CLNK. Interacts with FLT4 and KIT. Interacts with AXL. Interacts with SYK; activates PLCG1. Interacts with FLT1 (tyrosine-phosphorylated). Interacts (via SH2 domain) with PDGFRA and PDGFRB (tyrosine phosphorylated). Interacts with PIP5K1C. Interacts with NTRK1 and NTRK2 (phosphorylated upon ligand-binding). Interacts with TESPA1. Interacts with GRB2, LAT and THEMIS upon TCR activation in thymocytes; the association is weaker in the absence of TESPA1. Interacts (via C-terminal proline-rich domain (PRD)) with PLCG1 (via SH3 domain); this interaction leads to guanine nucleotide exchange from PlCG1 to DNM1 and enhances DNM1-dependent endocytosis. It depends on Ca(2+) as a cofactor. In terms of processing, tyrosine phosphorylated in response to signaling via activated FLT3, KIT and PDGFRA. Tyrosine phosphorylated by activated FGFR1, FGFR2, FGFR3 and FGFR4. Tyrosine phosphorylated by activated FLT1 and KDR. Tyrosine phosphorylated by activated PDGFRB. The receptor-mediated activation of PLCG1 involves its phosphorylation by tyrosine kinases in response to ligation of a variety of growth factor receptors and immune system receptors. For instance, SYK phosphorylates and activates PLCG1 in response to ligation of the B-cell receptor. Phosphorylated by ITK and TXK on Tyr-783 upon TCR activation in T-cells. May be dephosphorylated by PTPRJ. Post-translationally, ubiquitinated by CBLB in activated T-cells.

It localises to the cell projection. It is found in the lamellipodium. Its subcellular location is the ruffle. The enzyme catalyses a 1,2-diacyl-sn-glycero-3-phospho-(1D-myo-inositol-4,5-bisphosphate) + H2O = 1D-myo-inositol 1,4,5-trisphosphate + a 1,2-diacyl-sn-glycerol + H(+). The catalysed reaction is a 1,2-diacyl-sn-glycero-3-phospho-(1D-myo-inositol) + H2O = 1D-myo-inositol 1-phosphate + a 1,2-diacyl-sn-glycerol + H(+). Its activity is regulated as follows. Activated by phosphorylation on tyrosine residues. In terms of biological role, mediates the production of the second messenger molecules diacylglycerol (DAG) and inositol 1,4,5-trisphosphate (IP3). Plays an important role in the regulation of intracellular signaling cascades. Becomes activated in response to ligand-mediated activation of receptor-type tyrosine kinases, such as PDGFRA, PDGFRB, EGFR, FGFR1, FGFR2, FGFR3 and FGFR4. Plays a role in actin reorganization and cell migration. Guanine nucleotide exchange factor that binds the GTPase DNM1 and catalyzes the dissociation of GDP, allowing a GTP molecule to bind in its place, therefore enhancing DNM1-dependent endocytosis. The polypeptide is 1-phosphatidylinositol 4,5-bisphosphate phosphodiesterase gamma-1 (Mus musculus (Mouse)).